The sequence spans 549 residues: Glucose-6-phosphate isomerase (549 aa).

Glu-353 serves as the catalytic Proton donor. Active-site residues include His-384 and Lys-513.

The protein belongs to the GPI family.

The protein localises to the cytoplasm. It catalyses the reaction alpha-D-glucose 6-phosphate = beta-D-fructose 6-phosphate. The protein operates within carbohydrate biosynthesis; gluconeogenesis. Its pathway is carbohydrate degradation; glycolysis; D-glyceraldehyde 3-phosphate and glycerone phosphate from D-glucose: step 2/4. Functionally, catalyzes the reversible isomerization of glucose-6-phosphate to fructose-6-phosphate. This Brucella abortus (strain S19) protein is Glucose-6-phosphate isomerase.